The chain runs to 437 residues: tRNA-2-methylthio-N(6)-dimethylallyladenosine synthase (437 aa).

One can recognise an MTTase N-terminal domain in the interval 2–117 (KHLYIKTFGC…LPQMIQRALD (116 aa)). 6 residues coordinate [4Fe-4S] cluster: Cys-11, Cys-48, Cys-80, Cys-154, Cys-158, and Cys-161. The Radical SAM core domain maps to 140 to 372 (RAQGVVGQVT…QQLLNTQQLQ (233 aa)). The TRAM domain occupies 375-437 (KARVGRRESV…LPNSLRGRLV (63 aa)).

This sequence belongs to the methylthiotransferase family. MiaB subfamily. In terms of assembly, monomer. Requires [4Fe-4S] cluster as cofactor.

It localises to the cytoplasm. It catalyses the reaction N(6)-dimethylallyladenosine(37) in tRNA + (sulfur carrier)-SH + AH2 + 2 S-adenosyl-L-methionine = 2-methylsulfanyl-N(6)-dimethylallyladenosine(37) in tRNA + (sulfur carrier)-H + 5'-deoxyadenosine + L-methionine + A + S-adenosyl-L-homocysteine + 2 H(+). Functionally, catalyzes the methylthiolation of N6-(dimethylallyl)adenosine (i(6)A), leading to the formation of 2-methylthio-N6-(dimethylallyl)adenosine (ms(2)i(6)A) at position 37 in tRNAs that read codons beginning with uridine. The protein is tRNA-2-methylthio-N(6)-dimethylallyladenosine synthase of Magnetococcus marinus (strain ATCC BAA-1437 / JCM 17883 / MC-1).